We begin with the raw amino-acid sequence, 293 residues long: tRNA (guanine(9)-N1)-methyltransferase (293 aa).

Residues 1–31 (MSNDEINQNEEKVKRTPPLPPVPEGMSKKQW) form a disordered region. Thr-16 is subject to Phosphothreonine. The stretch at 32–61 (KKMCKRQRWEENKAKYNAERRVKKKRLRHE) forms a coiled coil. The 197-residue stretch at 83-279 (EPRINVNQTD…SVLPPRKLDA (197 aa)) folds into the SAM-dependent MTase TRM10-type domain. Residues 186–187 (LT), Gly-206, 210–214 (DKNRY), Cys-218, Leu-232, and 244–246 (RVL) contribute to the S-adenosyl-L-methionine site. Asp-210 serves as the catalytic Proton acceptor. Ser-283 is modified (phosphoserine).

It belongs to the class IV-like SAM-binding methyltransferase superfamily. TRM10 family. As to quaternary structure, monomer.

It is found in the cytoplasm. The protein localises to the nucleus. The catalysed reaction is guanosine(9) in tRNA + S-adenosyl-L-methionine = N(1)-methylguanosine(9) in tRNA + S-adenosyl-L-homocysteine + H(+). S-adenosyl-L-methionine-dependent guanine N(1)-methyltransferase that catalyzes the formation of N(1)-methylguanine at position 9 (m1G9) in cytoplasmic tRNAs. This is tRNA (guanine(9)-N1)-methyltransferase from Saccharomyces cerevisiae (strain ATCC 204508 / S288c) (Baker's yeast).